We begin with the raw amino-acid sequence, 178 residues long: ATP synthase subunit delta (178 aa).

Belongs to the ATPase delta chain family. As to quaternary structure, F-type ATPases have 2 components, F(1) - the catalytic core - and F(0) - the membrane proton channel. F(1) has five subunits: alpha(3), beta(3), gamma(1), delta(1), epsilon(1). F(0) has three main subunits: a(1), b(2) and c(10-14). The alpha and beta chains form an alternating ring which encloses part of the gamma chain. F(1) is attached to F(0) by a central stalk formed by the gamma and epsilon chains, while a peripheral stalk is formed by the delta and b chains.

The protein resides in the cell membrane. Functionally, f(1)F(0) ATP synthase produces ATP from ADP in the presence of a proton or sodium gradient. F-type ATPases consist of two structural domains, F(1) containing the extramembraneous catalytic core and F(0) containing the membrane proton channel, linked together by a central stalk and a peripheral stalk. During catalysis, ATP synthesis in the catalytic domain of F(1) is coupled via a rotary mechanism of the central stalk subunits to proton translocation. This protein is part of the stalk that links CF(0) to CF(1). It either transmits conformational changes from CF(0) to CF(1) or is implicated in proton conduction. The chain is ATP synthase subunit delta from Streptococcus equinus (Streptococcus bovis).